Here is a 587-residue protein sequence, read N- to C-terminus: Phosphomethylpyrimidine synthase (587 aa).

Residues Asn218, Met247, Tyr276, His312, 332-334 (SRG), 373-376 (DGLR), and Glu412 each bind substrate. Position 416 (His416) interacts with Zn(2+). Substrate is bound at residue Tyr439. Residue His480 coordinates Zn(2+). 3 residues coordinate [4Fe-4S] cluster: Cys560, Cys563, and Cys568.

It belongs to the ThiC family. It depends on [4Fe-4S] cluster as a cofactor.

It catalyses the reaction 5-amino-1-(5-phospho-beta-D-ribosyl)imidazole + S-adenosyl-L-methionine = 4-amino-2-methyl-5-(phosphooxymethyl)pyrimidine + CO + 5'-deoxyadenosine + formate + L-methionine + 3 H(+). It functions in the pathway cofactor biosynthesis; thiamine diphosphate biosynthesis. Its function is as follows. Catalyzes the synthesis of the hydroxymethylpyrimidine phosphate (HMP-P) moiety of thiamine from aminoimidazole ribotide (AIR) in a radical S-adenosyl-L-methionine (SAM)-dependent reaction. In Porphyromonas gingivalis (strain ATCC 33277 / DSM 20709 / CIP 103683 / JCM 12257 / NCTC 11834 / 2561), this protein is Phosphomethylpyrimidine synthase.